A 496-amino-acid polypeptide reads, in one-letter code: Squalene epoxidase ERG1 (496 aa).

Residues 1 to 16 (MSAVNVAPELINADNT) are Cytoplasmic-facing. Residues 17–37 (ITYDAIVIGAGVIGPCVATGL) traverse the membrane as a helical segment. FAD contacts are provided by residues 28 to 29 (VI), 48 to 49 (ER), arginine 56, and arginine 158. Residues 38–474 (ARKGKKVLIV…FLGLPMALLE (437 aa)) lie on the Lumenal side of the membrane. Glycyl lysine isopeptide (Lys-Gly) (interchain with G-Cter in ubiquitin) cross-links involve residues lysine 284, lysine 289, and lysine 311. 2 residues coordinate FAD: aspartate 335 and methionine 348. Residues 475–495 (GIMILITAIRVFTPFLFGELI) traverse the membrane as a helical segment. Glycine 496 is a topological domain (cytoplasmic).

It belongs to the squalene monooxygenase family. Interacts with ERG28. Requires FAD as cofactor.

The protein localises to the microsome membrane. The protein resides in the endoplasmic reticulum membrane. It is found in the lipid droplet. The catalysed reaction is squalene + reduced [NADPH--hemoprotein reductase] + O2 = (S)-2,3-epoxysqualene + oxidized [NADPH--hemoprotein reductase] + H2O + H(+). It participates in terpene metabolism; lanosterol biosynthesis; lanosterol from farnesyl diphosphate: step 2/3. With respect to regulation, inhibited by the allylamine antimycotic drugs. Squalene epoxidase; part of the third module of ergosterol biosynthesis pathway that includes the late steps of the pathway. ERG1 catalyzes the epoxidation of squalene into 2,3-epoxysqualene. The third module or late pathway involves the ergosterol synthesis itself through consecutive reactions that mainly occur in the endoplasmic reticulum (ER) membrane. Firstly, the squalene synthase ERG9 catalyzes the condensation of 2 farnesyl pyrophosphate moieties to form squalene, which is the precursor of all steroids. Squalene synthase is crucial for balancing the incorporation of farnesyl diphosphate (FPP) into sterol and nonsterol isoprene synthesis. Secondly, the squalene epoxidase ERG1 catalyzes the stereospecific oxidation of squalene to (S)-2,3-epoxysqualene, which is considered to be a rate-limiting enzyme in steroid biosynthesis. Then, the lanosterol synthase ERG7 catalyzes the cyclization of (S)-2,3 oxidosqualene to lanosterol, a reaction that forms the sterol core. In the next steps, lanosterol is transformed to zymosterol through a complex process involving various demethylation, reduction and desaturation reactions. The lanosterol 14-alpha-demethylase ERG11 (also known as CYP51) catalyzes C14-demethylation of lanosterol to produce 4,4'-dimethyl cholesta-8,14,24-triene-3-beta-ol, which is critical for ergosterol biosynthesis. The C-14 reductase ERG24 reduces the C14=C15 double bond of 4,4-dimethyl-cholesta-8,14,24-trienol to produce 4,4-dimethyl-cholesta-8,24-dienol. 4,4-dimethyl-cholesta-8,24-dienol is substrate of the C-4 demethylation complex ERG25-ERG26-ERG27 in which ERG25 catalyzes the three-step monooxygenation required for the demethylation of 4,4-dimethyl and 4alpha-methylsterols, ERG26 catalyzes the oxidative decarboxylation that results in a reduction of the 3-beta-hydroxy group at the C-3 carbon to an oxo group, and ERG27 is responsible for the reduction of the keto group on the C-3. ERG28 has a role as a scaffold to help anchor ERG25, ERG26 and ERG27 to the endoplasmic reticulum and ERG29 regulates the activity of the iron-containing C4-methylsterol oxidase ERG25. Then, the sterol 24-C-methyltransferase ERG6 catalyzes the methyl transfer from S-adenosyl-methionine to the C-24 of zymosterol to form fecosterol. The C-8 sterol isomerase ERG2 catalyzes the reaction which results in unsaturation at C-7 in the B ring of sterols and thus converts fecosterol to episterol. The sterol-C5-desaturase ERG3 then catalyzes the introduction of a C-5 double bond in the B ring to produce 5-dehydroepisterol. The C-22 sterol desaturase ERG5 further converts 5-dehydroepisterol into ergosta-5,7,22,24(28)-tetraen-3beta-ol by forming the C-22(23) double bond in the sterol side chain. Finally, ergosta-5,7,22,24(28)-tetraen-3beta-ol is substrate of the C-24(28) sterol reductase ERG4 to produce ergosterol. The chain is Squalene epoxidase ERG1 from Saccharomyces cerevisiae (strain ATCC 204508 / S288c) (Baker's yeast).